We begin with the raw amino-acid sequence, 391 residues long: BRCA1-A complex subunit Abraxas 1 (391 aa).

Positions 8 to 156 constitute an MPN domain; that stretch reads VRISGFVLSS…THRLEFSAFI (149 aa). Residues 223 to 261 are a coiled coil; it reads LLAEMQKVCVEVEKSERTVEKLQEDIAQLKEAIGKQKTH. Residues 354–391 form a disordered region; sequence QRLKRKRKTREVSESASESGSDTEIEMNGQSGSNSPVF. The segment covering 367–391 has biased composition (polar residues); sequence ESASESGSDTEIEMNGQSGSNSPVF. Ser388 carries the post-translational modification Phosphoserine. Positions 388-391 match the pSXXF motif motif; it reads SPVF.

The protein belongs to the FAM175 family. Abraxas subfamily. As to quaternary structure, component of the ARISC complex. Component of the BRCA1-A complex. Homodimer. Post-translationally, phosphorylation of Ser-388 of the pSXXF motif by ATM or ATR constitutes a specific recognition motif for the BRCT domain of BRCA1.

It localises to the nucleus. In terms of biological role, involved in DNA damage response and double-strand break (DSB) repair. Component of the BRCA1-A complex, acting as a central scaffold protein that assembles the various components of the complex. The BRCA1-A complex specifically recognizes 'Lys-63'-linked ubiquitinated histones H2A and H2AX at DNA lesion sites. This complex also possesses deubiquitinase activity that specifically removes 'Lys-63'-linked ubiquitin on histones H2A and H2AX. The sequence is that of BRCA1-A complex subunit Abraxas 1 from Danio rerio (Zebrafish).